The following is a 334-amino-acid chain: tRNA uridine(34) hydroxylase (334 aa).

The 95-residue stretch at 123–217 folds into the Rhodanese domain; the sequence is SDPDVILVDT…YLEEVKAEES (95 aa). Residue C177 is the Cysteine persulfide intermediate of the active site.

Belongs to the TrhO family.

The catalysed reaction is uridine(34) in tRNA + AH2 + O2 = 5-hydroxyuridine(34) in tRNA + A + H2O. Its function is as follows. Catalyzes oxygen-dependent 5-hydroxyuridine (ho5U) modification at position 34 in tRNAs. This is tRNA uridine(34) hydroxylase from Shewanella baltica (strain OS195).